A 146-amino-acid chain; its full sequence is Transcription antitermination protein NusB (146 aa).

It belongs to the NusB family.

Involved in transcription antitermination. Required for transcription of ribosomal RNA (rRNA) genes. Binds specifically to the boxA antiterminator sequence of the ribosomal RNA (rrn) operons. This chain is Transcription antitermination protein NusB, found in Herpetosiphon aurantiacus (strain ATCC 23779 / DSM 785 / 114-95).